A 130-amino-acid chain; its full sequence is Putative pre-16S rRNA nuclease (130 aa).

Belongs to the YqgF nuclease family.

The protein localises to the cytoplasm. Its function is as follows. Could be a nuclease involved in processing of the 5'-end of pre-16S rRNA. The polypeptide is Putative pre-16S rRNA nuclease (Sulfurimonas denitrificans (strain ATCC 33889 / DSM 1251) (Thiomicrospira denitrificans (strain ATCC 33889 / DSM 1251))).